The chain runs to 425 residues: Glutamate-1-semialdehyde 2,1-aminomutase (425 aa).

Lysine 264 is modified (N6-(pyridoxal phosphate)lysine).

It belongs to the class-III pyridoxal-phosphate-dependent aminotransferase family. HemL subfamily. Homodimer. Requires pyridoxal 5'-phosphate as cofactor.

The protein localises to the cytoplasm. It carries out the reaction (S)-4-amino-5-oxopentanoate = 5-aminolevulinate. It functions in the pathway porphyrin-containing compound metabolism; protoporphyrin-IX biosynthesis; 5-aminolevulinate from L-glutamyl-tRNA(Glu): step 2/2. This is Glutamate-1-semialdehyde 2,1-aminomutase from Leptospira biflexa serovar Patoc (strain Patoc 1 / Ames).